The following is a 61-amino-acid chain: MALKITQIKGTVGTKPKHRENLRSLGLKRIRHTVIRPDTPEVRGMILAVRHLIVVEEVAGE.

It belongs to the universal ribosomal protein uL30 family. In terms of assembly, part of the 50S ribosomal subunit.

In Corynebacterium glutamicum (strain ATCC 13032 / DSM 20300 / JCM 1318 / BCRC 11384 / CCUG 27702 / LMG 3730 / NBRC 12168 / NCIMB 10025 / NRRL B-2784 / 534), this protein is Large ribosomal subunit protein uL30.